The following is a 101-amino-acid chain: ATP-dependent Clp protease adapter protein ClpS (101 aa).

The protein belongs to the ClpS family. Binds to the N-terminal domain of the chaperone ClpA.

In terms of biological role, involved in the modulation of the specificity of the ClpAP-mediated ATP-dependent protein degradation. The sequence is that of ATP-dependent Clp protease adapter protein ClpS from Corynebacterium efficiens (strain DSM 44549 / YS-314 / AJ 12310 / JCM 11189 / NBRC 100395).